The primary structure comprises 170 residues: MARVEL domain-containing protein 1 (170 aa).

Residues 1-38 (MEGERPRSDTVTTTVSSHMETISLGGSIAYDRSFLRSP) are Cytoplasmic-facing. An MARVEL domain is found at 34–167 (FLRSPTGVLL…STYFSFQAWR (134 aa)). Residues 39-59 (TGVLLLMEIMFGLLVWALIAG) form a helical membrane-spanning segment. The Extracellular segment spans residues 60 to 67 (SEYFLFSA). Residues 68–88 (FGWVMFVAVFYWVLSVFFFLL) traverse the membrane as a helical segment. Over 89–102 (HLTRANTRITKVPW) the chain is Cytoplasmic. The helical transmembrane segment at 103 to 123 (SLVGLCFNGSAFVLYLIAAVV) threads the bilayer. Residues 124-145 (EASSVNKDVHQHHNYNSWTASS) are Extracellular-facing. Residues 146 to 166 (FFAFIVTVCYALSTYFSFQAW) traverse the membrane as a helical segment. Over 167–170 (RTKS) the chain is Cytoplasmic.

The protein localises to the membrane. The protein resides in the nucleus. The sequence is that of MARVEL domain-containing protein 1 (marveld1) from Xenopus laevis (African clawed frog).